Reading from the N-terminus, the 436-residue chain is Serine--tRNA ligase (436 aa).

Position 239–241 (Thr239–Glu241) interacts with L-serine. Arg270–Glu272 contacts ATP. Glu293 provides a ligand contact to L-serine. An ATP-binding site is contributed by Glu357–Ser360. Ser392 contacts L-serine.

The protein belongs to the class-II aminoacyl-tRNA synthetase family. Type-1 seryl-tRNA synthetase subfamily. As to quaternary structure, homodimer. The tRNA molecule binds across the dimer.

Its subcellular location is the cytoplasm. It carries out the reaction tRNA(Ser) + L-serine + ATP = L-seryl-tRNA(Ser) + AMP + diphosphate + H(+). The catalysed reaction is tRNA(Sec) + L-serine + ATP = L-seryl-tRNA(Sec) + AMP + diphosphate + H(+). Its pathway is aminoacyl-tRNA biosynthesis; selenocysteinyl-tRNA(Sec) biosynthesis; L-seryl-tRNA(Sec) from L-serine and tRNA(Sec): step 1/1. Its function is as follows. Catalyzes the attachment of serine to tRNA(Ser). Is also able to aminoacylate tRNA(Sec) with serine, to form the misacylated tRNA L-seryl-tRNA(Sec), which will be further converted into selenocysteinyl-tRNA(Sec). The sequence is that of Serine--tRNA ligase from Leuconostoc citreum (strain KM20).